Reading from the N-terminus, the 229-residue chain is Large ribosomal subunit protein uL1 (229 aa).

It belongs to the universal ribosomal protein uL1 family. Part of the 50S ribosomal subunit.

Functionally, binds directly to 23S rRNA. The L1 stalk is quite mobile in the ribosome, and is involved in E site tRNA release. Protein L1 is also a translational repressor protein, it controls the translation of the L11 operon by binding to its mRNA. In Actinobacillus pleuropneumoniae serotype 5b (strain L20), this protein is Large ribosomal subunit protein uL1.